Consider the following 759-residue polypeptide: Xaa-Pro dipeptidyl-peptidase (759 aa).

Active-site charge relay system residues include Ser-347, Asp-467, and His-497.

Belongs to the peptidase S15 family. In terms of assembly, homodimer.

The protein resides in the cytoplasm. The enzyme catalyses Hydrolyzes Xaa-Pro-|- bonds to release unblocked, N-terminal dipeptides from substrates including Ala-Pro-|-p-nitroanilide and (sequentially) Tyr-Pro-|-Phe-Pro-|-Gly-Pro-|-Ile.. Functionally, removes N-terminal dipeptides sequentially from polypeptides having unsubstituted N-termini provided that the penultimate residue is proline. This Streptococcus gordonii (strain Challis / ATCC 35105 / BCRC 15272 / CH1 / DL1 / V288) protein is Xaa-Pro dipeptidyl-peptidase.